Consider the following 969-residue polypeptide: Leucine--tRNA ligase (969 aa).

The 'HIGH' region signature appears at Pro-78 to His-89. A 'KMSKS' region motif is present at residues Lys-739 to Ser-743. Lys-742 is a binding site for ATP.

The protein belongs to the class-I aminoacyl-tRNA synthetase family.

Its subcellular location is the cytoplasm. The catalysed reaction is tRNA(Leu) + L-leucine + ATP = L-leucyl-tRNA(Leu) + AMP + diphosphate. This chain is Leucine--tRNA ligase, found in Mycobacterium tuberculosis (strain ATCC 25177 / H37Ra).